Reading from the N-terminus, the 2813-residue chain is A-kinase anchor protein 13 (2813 aa).

Disordered regions lie at residues 304-400 (AQDP…QDSC) and 415-439 (LSSCGNRNEETGTKSSGMPTDQESL). Residues 427–439 (TKSSGMPTDQESL) are compositionally biased toward polar residues. Residues 494–516 (WKNVLQGGESTKERFENSNIGTA) are important for interaction with PRKAR2A. Disordered stretches follow at residues 539–585 (AASS…VDQN), 632–653 (HQNSETNSSHAQSQKGKSSPIC), and 690–726 (SESTTARQPSSQDPPDASHCEDPQAHTVTSDPVRDTQ). Positions 561-577 (STEKTAETETSRSREES) are enriched in basic and acidic residues. Over residues 690–702 (SESTTARQPSSQD) the composition is skewed to polar residues. Ser-790 carries the phosphoserine modification. Disordered stretches follow at residues 805-856 (VPSQ…AAEL) and 939-965 (ENALSSGTLQEEQRTPPPGQDTQQFHE). A Phosphothreonine modification is found at Thr-815. Residues 835–844 (PDTRPLEDRA) are compositionally biased toward basic and acidic residues. Composition is skewed to polar residues over residues 847–856 (LSTSSTAAEL) and 939–948 (ENALSSGTLQ). Phosphothreonine is present on Thr-953. A Phosphoserine modification is found at Ser-983. Disordered stretches follow at residues 1431–1455 (GVLKRESGSDSDLFHSPSDDMDSII) and 1467–1542 (DITG…DSIT). The segment covering 1467 to 1478 (DITGSSSSTDDT) has biased composition (low complexity). Residues 1488–1497 (GSDVSLSQIL) are compositionally biased toward polar residues. 5 positions are modified to phosphoserine: Ser-1489, Ser-1507, Ser-1540, Ser-1565, and Ser-1602. Residues 1525 to 1540 (SEPADPGDVEEEEMDS) are compositionally biased toward acidic residues. The interval 1585 to 1715 (RVLGDVVRRP…HSTFHNTSAN (131 aa)) is important for interaction with MAP2K3. A disordered region spans residues 1601–1638 (FSLEGLTGGAGVGNKPSSSLEVSSANAEELRHPFSGEE). Over residues 1615-1626 (KPSSSLEVSSAN) the composition is skewed to polar residues. A compositionally biased stretch (basic and acidic residues) spans 1628 to 1638 (EELRHPFSGEE). A phosphoserine mark is found at Ser-1642, Ser-1645, and Ser-1647. Lys-1670 is modified (N6-methyllysine). The disordered stretch occupies residues 1755–1793 (KMSSSKKSKEKEKEKDKIKEKEKDSKDKEKDKKTVNGHT). Residues 1758-1790 (SSKKSKEKEKEKDKIKEKEKDSKDKEKDKKTVN) are a coiled coil. Over residues 1761–1788 (KSKEKEKEKDKIKEKEKDSKDKEKDKKT) the composition is skewed to basic and acidic residues. The Phorbol-ester/DAG-type zinc finger occupies 1791–1838 (GHTFSSIPVVGPISCSQCMKPFTNKDAYTCANCSAFVHKGCRESLASC). 3 positions are modified to phosphoserine: Ser-1876, Ser-1895, and Ser-1929. Residues 1919–2813 (MSNTWKFLSH…VSAEGEEIFC (895 aa)) form an interaction with ESR1 region. Residue Thr-1930 is modified to Phosphothreonine. Residues Ser-1932 and Ser-1945 each carry the phosphoserine modification. In terms of domain architecture, DH spans 1994 to 2191 (KRQEVIYELM…KDVIGAVDSK (198 aa)). In terms of domain architecture, PH spans 2231 to 2333 (KLVRDGSVFL…WIQIIQDTIN (103 aa)). 2 positions are modified to phosphoserine: Ser-2345 and Ser-2398. A coiled-coil region spans residues 2345-2381 (SENEEEKKMLDTRARELKEQLHQKDQKILLLLEEKEM). Residues 2466–2502 (ETFGGFDSHQMNASKGGEKEEGDDGQDLRRTESDSGL) are disordered. A Phosphothreonine modification is found at Thr-2467. Residue Ser-2473 is modified to Phosphoserine. Residues 2491–2502 (QDLRRTESDSGL) are compositionally biased toward basic and acidic residues. 2 positions are modified to phosphoserine: Ser-2563 and Ser-2566. Residues 2568–2683 (LIEQEKQRSL…RLSQRQTERD (116 aa)) are a coiled coil. Residues 2665–2684 (QEQLRREAERLSQRQTERDL) show a composition bias toward basic and acidic residues. Residues 2665-2813 (QEQLRREAER…VSAEGEEIFC (149 aa)) form a disordered region. A phosphoserine mark is found at Ser-2703, Ser-2709, and Ser-2728. Positions 2720–2735 (SLDSELSVSPKRNSIS) are enriched in polar residues. A compositionally biased stretch (low complexity) spans 2760-2771 (QSQAPASTSAST).

Interacts with the cAMP-dependent protein kinase (PKA) holoenzyme and with the regulatory subunit PRKAR2A. Interacts with RHOA. Also interacts with RHOB and RHOC. Identified in a ternary complex with RHOA and PRKAR2A. Identified in a complex with NR3C1 and RHOA. Interacts with BRAF and KSR1. Identified in a complex with BRAF and KSR1. Component of a signaling complex containing at least AKAP13, PKN1, MAPK14, ZAK and MAP2K3. Within this complex, AKAP13 interacts directly with PKN1, which in turn recruits MAPK14, MAP2K3 and ZAK. Interacts (phosphorylated form) with YWHAB and YWHAZ. Interaction with YWHAB inhibits activation of RHOA, interferes with PKN1 binding and activation of MAP kinases. Interacts with GNA12. Interacts with IKBKB. Interacts with ESR1, THRA, PPARA and NME2. Interacts (via the C-terminal domain after the PH domain) with MEF2C and RXRB. Interacts (via the C-terminal domain after the PH domain) with PRKD1. In terms of tissue distribution, detected in mammary gland. Detected in heart (at protein level). Expressed as a 5.3 kb transcript in hematopoietic cells, skeletal muscle, lung, heart, estrogen-responsive reproductive tissues, including breast ductal epithelium. Also found in testis and breast cancer cell lines. Predominantly expressed as a 10 kb transcript in the heart and at lower levels in the lung, placenta, kidney, pancreas, skeletal muscle and liver. Transcripts of between 6-9 kb are also expressed in myeloid and lymphoid lineages, a variety of epithelial tissues, and in skeletal muscle.

The protein localises to the cytoplasm. Its subcellular location is the cytosol. It localises to the cell cortex. It is found in the nucleus. The protein resides in the membrane. Its function is as follows. Scaffold protein that plays an important role in assembling signaling complexes downstream of several types of G protein-coupled receptors. Activates RHOA in response to signaling via G protein-coupled receptors via its function as Rho guanine nucleotide exchange factor. May also activate other Rho family members. Part of a kinase signaling complex that links ADRA1A and ADRA1B adrenergic receptor signaling to the activation of downstream p38 MAP kinases, such as MAPK11 and MAPK14. Part of a signaling complex that links ADRA1B signaling to the activation of RHOA and IKBKB/IKKB, leading to increased NF-kappa-B transcriptional activity. Part of a RHOA-dependent signaling cascade that mediates responses to lysophosphatidic acid (LPA), a signaling molecule that activates G-protein coupled receptors and potentiates transcriptional activation of the glucocorticoid receptor NR3C1. Part of a signaling cascade that stimulates MEF2C-dependent gene expression in response to lysophosphatidic acid (LPA). Part of a signaling pathway that activates MAPK11 and/or MAPK14 and leads to increased transcription activation of the estrogen receptors ESR1 and ESR2. Part of a signaling cascade that links cAMP and EGFR signaling to BRAF signaling and to PKA-mediated phosphorylation of KSR1, leading to the activation of downstream MAP kinases, such as MAPK1 or MAPK3. Functions as a scaffold protein that anchors cAMP-dependent protein kinase (PKA) and PRKD1. This promotes activation of PRKD1, leading to increased phosphorylation of HDAC5 and ultimately cardiomyocyte hypertrophy. Has no guanine nucleotide exchange activity on CDC42, Ras or Rac. Required for normal embryonic heart development, and in particular for normal sarcomere formation in the developing cardiomyocytes. Plays a role in cardiomyocyte growth and cardiac hypertrophy in response to activation of the beta-adrenergic receptor by phenylephrine or isoproterenol. Required for normal adaptive cardiac hypertrophy in response to pressure overload. Plays a role in osteogenesis. The polypeptide is A-kinase anchor protein 13 (AKAP13) (Homo sapiens (Human)).